The following is a 1997-amino-acid chain: Protein MOR1 (1997 aa).

HEAT repeat units follow at residues 48–86 (DARLREFGPLFKKTVADSNAPVQEKALDALLAFQRAADA) and 164–202 (VVPPKKILKMLPELFDHPDQNVRASSKGLTLELCRWIGK). Residues 236-264 (RKIRSEQEKELEEEVVPEAAGTNNSEEAV) form a disordered region. HEAT repeat units lie at residues 321–359 (PGDFHEICRTLKKLITDVNLAVSVEATQAIGNLAKGLRT), 362–400 (SGNSRVLLPVLLEKLKEKKPTMTEALSQTLQAMHKSGCI), and 441–479 (LKLHKEYVPICMECLNDGTPEVRDASFSVLTAIAKMVGM). The tract at residues 501 to 576 (IGSASDTTSG…DGGPQSKASA (76 aa)) is disordered. Residues 504–520 (ASDTTSGTVAASNTGVG) show a composition bias toward polar residues. Residues 529 to 539 (SSSMRRSAASM) are compositionally biased toward low complexity. 4 HEAT repeats span residues 848–886 (EDISAKITPTLLKNLGSPDWKLRLESIDAVSKIVEEAHK), 890–928 (PTGTVELFTALRARLYDSNKNLVMATLSTIGGLASAMGP), 931–969 (EKSSKGILADVLKCLGDNKKHMRECTLTALDLWVAAAQL), and 1007–1045 (PSEALPLLKPSASSLMDKSSEVRKAAESFMNEILKICGQ). The tract at residues 1087–1115 (MSLPSKAGSKNNKHGPNDRGSNVSKAVSQ) is disordered. 4 HEAT repeats span residues 1233–1259 (TTCLLKVLDFLPELFDVLKDQSYMLTE), 1260–1294 (AEAAIFLPCLMEKSGHNIEKVREKMGELIKQMVNI), 1295–1332 (YSLPKLLPYILEGLRSKNNRTRIECVDIIGYFMDHHGT), and 1334–1372 (VSGLLKNLPSVAALTAERDGEIRKAALNTLATAYKNLGD). Basic and acidic residues predominate over residues 1400–1410 (MDKRREGRPGD). The interval 1400-1436 (MDKRREGRPGDARAALRRSVRENGSDIAEQSGEAVSR) is disordered. The stretch at 1539-1579 (RSCKYVLNTLMQTFQIKRLAHAVKEGTLDNLITELLLWLLD) is one HEAT 14 repeat. Positions 1755–1776 (MGQTHWGDAGSNNPNPSTHSTD) are disordered. Residues 1764 to 1776 (GSNNPNPSTHSTD) are compositionally biased toward polar residues.

Belongs to the TOG/XMAP215 family.

It is found in the cytoplasm. Its subcellular location is the cytoskeleton. In terms of biological role, microtubule-associated protein that is essential for cortical microtubules organization and function. This is Protein MOR1 (MOR1) from Oryza sativa subsp. japonica (Rice).